Here is a 76-residue protein sequence, read N- to C-terminus: DNA-directed RNA polymerase subunit epsilon (76 aa).

It belongs to the RNA polymerase subunit epsilon family. As to quaternary structure, RNAP is composed of a core of 2 alpha, a beta and a beta' subunit. The core is associated with a delta subunit, and at least one of epsilon or omega. When a sigma factor is associated with the core the holoenzyme is formed, which can initiate transcription.

It catalyses the reaction RNA(n) + a ribonucleoside 5'-triphosphate = RNA(n+1) + diphosphate. In terms of biological role, a non-essential component of RNA polymerase (RNAP). The sequence is that of DNA-directed RNA polymerase subunit epsilon from Streptococcus agalactiae serotype Ia (strain ATCC 27591 / A909 / CDC SS700).